The following is an 844-amino-acid chain: Beta-mannosidase B (844 aa).

Catalysis depends on glutamate 432, which acts as the Proton donor.

This sequence belongs to the glycosyl hydrolase 2 family. Beta-mannosidase B subfamily.

It carries out the reaction Hydrolysis of terminal, non-reducing beta-D-mannose residues in beta-D-mannosides.. Its pathway is glycan metabolism; N-glycan degradation. Exoglycosidase that cleaves the single beta-linked mannose residue from the non-reducing end of beta-mannosidic oligosaccharides of various complexity and length. Prefers mannobiose over mannotriose and has no activity against polymeric mannan. Is also severely restricted by galactosyl substitutions at the +1 subsite. In Aspergillus oryzae (strain ATCC 42149 / RIB 40) (Yellow koji mold), this protein is Beta-mannosidase B (mndB).